Here is a 110-residue protein sequence, read N- to C-terminus: Phosphoribosyl-ATP pyrophosphatase (110 aa).

Belongs to the PRA-PH family.

The protein localises to the cytoplasm. The catalysed reaction is 1-(5-phospho-beta-D-ribosyl)-ATP + H2O = 1-(5-phospho-beta-D-ribosyl)-5'-AMP + diphosphate + H(+). It functions in the pathway amino-acid biosynthesis; L-histidine biosynthesis; L-histidine from 5-phospho-alpha-D-ribose 1-diphosphate: step 2/9. The sequence is that of Phosphoribosyl-ATP pyrophosphatase from Pseudomonas fluorescens (strain Pf0-1).